The sequence spans 138 residues: Histone H3 (138 aa).

The interval 1–49 is disordered; that stretch reads MARTKQTARKSTGGKAPRKQLATKAARKQAPSQVSGGVKKPHRYRPGTV. N6,N6,N6-trimethyllysine; alternate is present on K5. Position 5 is an N6,N6-dimethyllysine; alternate (K5). N6-methyllysine; alternate occurs at positions 5 and 10. K10 is subject to N6-acetyllysine; alternate. Position 11 is a phosphoserine (S11). The residue at position 15 (K15) is an N6,N6-dimethyllysine; alternate. An N6-methyllysine; alternate mark is found at K15, K19, K24, K28, and K39. K15, K19, K24, K28, and K39 each carry N6-acetyllysine; alternate. 2 positions are modified to N6,N6,N6-trimethyllysine; alternate: K28 and K39. Residues K28 and K39 each carry the N6,N6-dimethyllysine; alternate modification. K59 and K67 each carry N6-acetyllysine. The residue at position 82 (K82) is an N6,N6,N6-trimethyllysine; alternate. N6,N6-dimethyllysine; alternate is present on K82. K82 carries the post-translational modification N6-methyllysine; alternate.

It belongs to the histone H3 family. In terms of assembly, the nucleosome is a histone octamer containing two molecules each of H2A, H2B, H3 and H4 assembled in one H3-H4 heterotetramer and two H2A-H2B heterodimers. The octamer wraps approximately 147 bp of DNA. Phosphorylated to form H3S10ph. H3S10ph promotes subsequent H3K14ac formation and is required for transcriptional activation through TBP recruitment to the promoters. In terms of processing, mono-, di- and trimethylated by the COMPASS complex to form H3K4me1/2/3. H3K4me activates gene expression by regulating transcription elongation and plays a role in telomere length maintenance. H3K4me enrichment correlates with transcription levels, and occurs in a 5' to 3' gradient with H3K4me3 enrichment at the 5'-end of genes, shifting to H3K4me2 and then H3K4me1. Methylated by SET2 to form H3K36me. H3K36me represses gene expression. Methylated by DOT1 to form H3K79me. H3K79me is required for association of SIR proteins with telomeric regions and for telomeric silencing. The COMPASS-mediated formation of H3K4me2/3 and the DOT1-mediated formation of H3K79me require H2BK123ub1. Post-translationally, acetylation of histone H3 leads to transcriptional activation. H3K14ac formation by GCN5 is promoted by H3S10ph. H3K14ac can also be formed by ESA1. H3K56ac formation occurs predominantly in newly synthesized H3 molecules during G1, S and G2/M of the cell cycle and may be involved in DNA repair.

The protein localises to the nucleus. Its subcellular location is the chromosome. In terms of biological role, core component of nucleosome. Nucleosomes wrap and compact DNA into chromatin, limiting DNA accessibility to the cellular machineries which require DNA as a template. Histones thereby play a central role in transcription regulation, DNA repair, DNA replication and chromosomal stability. DNA accessibility is regulated via a complex set of post-translational modifications of histones, also called histone code, and nucleosome remodeling. The sequence is that of Histone H3 (HHT1) from Cryptococcus neoformans var. neoformans serotype D (strain B-3501A) (Filobasidiella neoformans).